A 131-amino-acid polypeptide reads, in one-letter code: MRHRYSNRKLNRTTSHRLAMLRNMANSLLKHEVIVTTLPKAKELRRVAEPLITLGKKPSLANRRLAFDRTRDREIVVKLFDVLGARYATRNGGYVRILKYGFRKGDNAPMALVELVDRPEDAVAVEDNSAE.

Belongs to the bacterial ribosomal protein bL17 family. As to quaternary structure, part of the 50S ribosomal subunit. Contacts protein L32.

The chain is Large ribosomal subunit protein bL17 from Chromobacterium violaceum (strain ATCC 12472 / DSM 30191 / JCM 1249 / CCUG 213 / NBRC 12614 / NCIMB 9131 / NCTC 9757 / MK).